A 431-amino-acid chain; its full sequence is Glutamyl-tRNA(Gln) amidotransferase subunit A (431 aa).

Residues K55 and S130 each act as charge relay system in the active site. Residue S154 is the Acyl-ester intermediate of the active site.

The protein belongs to the amidase family. GatA subfamily. As to quaternary structure, heterotrimer of A, B and C subunits.

The catalysed reaction is L-glutamyl-tRNA(Gln) + L-glutamine + ATP + H2O = L-glutaminyl-tRNA(Gln) + L-glutamate + ADP + phosphate + H(+). Allows the formation of correctly charged Gln-tRNA(Gln) through the transamidation of misacylated Glu-tRNA(Gln) in organisms which lack glutaminyl-tRNA synthetase. The reaction takes place in the presence of glutamine and ATP through an activated gamma-phospho-Glu-tRNA(Gln). This Methanococcus maripaludis (strain C7 / ATCC BAA-1331) protein is Glutamyl-tRNA(Gln) amidotransferase subunit A.